Reading from the N-terminus, the 45-residue chain is MTKRTFGGTSRKRKRVSGFRVRMRSHTGRRVIRTRRKRGRSRLAA.

The segment at 1–45 (MTKRTFGGTSRKRKRVSGFRVRMRSHTGRRVIRTRRKRGRSRLAA) is disordered. The segment covering 10 to 45 (SRKRKRVSGFRVRMRSHTGRRVIRTRRKRGRSRLAA) has biased composition (basic residues).

The protein belongs to the bacterial ribosomal protein bL34 family.

The sequence is that of Large ribosomal subunit protein bL34 from Synechococcus sp. (strain CC9311).